Reading from the N-terminus, the 140-residue chain is Class I hydrophobin C (140 aa).

The first 23 residues, 1–23 (MKFFVPAFLFAATAMALPGSGSA), serve as a signal peptide directing secretion. Disulfide bonds link cysteine 41–cysteine 114, cysteine 49–cysteine 108, cysteine 50–cysteine 85, and cysteine 115–cysteine 133.

It belongs to the fungal hydrophobin family.

It is found in the secreted. Its subcellular location is the cell wall. Its function is as follows. Aerial growth, conidiation, and dispersal of filamentous fungi in the environment rely upon a capability of their secreting small amphipathic proteins called hydrophobins (HPBs) with low sequence identity. Class I can self-assemble into an outermost layer of rodlet bundles on aerial cell surfaces, conferring cellular hydrophobicity that supports fungal growth, development and dispersal; whereas Class II form highly ordered films at water-air interfaces through intermolecular interactions but contribute nothing to the rodlet structure. In P.expansum, hydrophobins contribute to germination, tolerance to cold stress and mycotoxins patulin and citrinin production. HfbC is involved in the virulence on apple. The chain is Class I hydrophobin C from Penicillium expansum (Blue mold rot fungus).